We begin with the raw amino-acid sequence, 453 residues long: Bifunctional protein GlmU (453 aa).

The segment at 1–226 (MKFSAVILAA…PIEVEGVNDR (226 aa)) is pyrophosphorylase. UDP-N-acetyl-alpha-D-glucosamine-binding positions include 8–11 (LAAG), lysine 22, glutamine 73, 78–79 (GT), 100–102 (YGD), glycine 137, glutamate 151, asparagine 166, and asparagine 224. Aspartate 102 provides a ligand contact to Mg(2+). Asparagine 224 contacts Mg(2+). The interval 227 to 247 (AQLARLERAFQAAQAKKLLEQ) is linker. Residues 248–453 (GVMLRDPARF…TGWQRPVKKK (206 aa)) form an N-acetyltransferase region. UDP-N-acetyl-alpha-D-glucosamine contacts are provided by arginine 330 and lysine 348. Catalysis depends on histidine 360, which acts as the Proton acceptor. 2 residues coordinate UDP-N-acetyl-alpha-D-glucosamine: tyrosine 363 and asparagine 374. Acetyl-CoA is bound by residues alanine 377, 383–384 (NY), serine 402, alanine 420, and arginine 437.

This sequence in the N-terminal section; belongs to the N-acetylglucosamine-1-phosphate uridyltransferase family. It in the C-terminal section; belongs to the transferase hexapeptide repeat family. Homotrimer. Mg(2+) serves as cofactor.

The protein resides in the cytoplasm. The enzyme catalyses alpha-D-glucosamine 1-phosphate + acetyl-CoA = N-acetyl-alpha-D-glucosamine 1-phosphate + CoA + H(+). The catalysed reaction is N-acetyl-alpha-D-glucosamine 1-phosphate + UTP + H(+) = UDP-N-acetyl-alpha-D-glucosamine + diphosphate. Its pathway is nucleotide-sugar biosynthesis; UDP-N-acetyl-alpha-D-glucosamine biosynthesis; N-acetyl-alpha-D-glucosamine 1-phosphate from alpha-D-glucosamine 6-phosphate (route II): step 2/2. It participates in nucleotide-sugar biosynthesis; UDP-N-acetyl-alpha-D-glucosamine biosynthesis; UDP-N-acetyl-alpha-D-glucosamine from N-acetyl-alpha-D-glucosamine 1-phosphate: step 1/1. It functions in the pathway bacterial outer membrane biogenesis; LPS lipid A biosynthesis. Functionally, catalyzes the last two sequential reactions in the de novo biosynthetic pathway for UDP-N-acetylglucosamine (UDP-GlcNAc). The C-terminal domain catalyzes the transfer of acetyl group from acetyl coenzyme A to glucosamine-1-phosphate (GlcN-1-P) to produce N-acetylglucosamine-1-phosphate (GlcNAc-1-P), which is converted into UDP-GlcNAc by the transfer of uridine 5-monophosphate (from uridine 5-triphosphate), a reaction catalyzed by the N-terminal domain. This Vibrio vulnificus (strain YJ016) protein is Bifunctional protein GlmU.